Reading from the N-terminus, the 425-residue chain is Serine--tRNA ligase (425 aa).

Position 231–233 (231–233) interacts with L-serine; it reads TAE. Residues 262–264 and V278 contribute to the ATP site; that span reads RTE. L-serine is bound at residue E285. Residue 349-352 coordinates ATP; the sequence is EVTS. T384 contacts L-serine.

The protein belongs to the class-II aminoacyl-tRNA synthetase family. Type-1 seryl-tRNA synthetase subfamily. Homodimer. The tRNA molecule binds across the dimer.

It is found in the cytoplasm. It carries out the reaction tRNA(Ser) + L-serine + ATP = L-seryl-tRNA(Ser) + AMP + diphosphate + H(+). It catalyses the reaction tRNA(Sec) + L-serine + ATP = L-seryl-tRNA(Sec) + AMP + diphosphate + H(+). It participates in aminoacyl-tRNA biosynthesis; selenocysteinyl-tRNA(Sec) biosynthesis; L-seryl-tRNA(Sec) from L-serine and tRNA(Sec): step 1/1. Catalyzes the attachment of serine to tRNA(Ser). Is also able to aminoacylate tRNA(Sec) with serine, to form the misacylated tRNA L-seryl-tRNA(Sec), which will be further converted into selenocysteinyl-tRNA(Sec). This chain is Serine--tRNA ligase, found in Dictyoglomus turgidum (strain DSM 6724 / Z-1310).